Consider the following 251-residue polypeptide: 5'-nucleotidase SurE (251 aa).

A divalent metal cation contacts are provided by Asp-8, Asp-9, Ser-39, and Asn-91.

This sequence belongs to the SurE nucleotidase family. The cofactor is a divalent metal cation.

The protein resides in the cytoplasm. The catalysed reaction is a ribonucleoside 5'-phosphate + H2O = a ribonucleoside + phosphate. In terms of biological role, nucleotidase that shows phosphatase activity on nucleoside 5'-monophosphates. The protein is 5'-nucleotidase SurE of Halorhodospira halophila (strain DSM 244 / SL1) (Ectothiorhodospira halophila (strain DSM 244 / SL1)).